Reading from the N-terminus, the 719-residue chain is Endonuclease MutS2 (719 aa).

An ATP-binding site is contributed by 273–280; it reads GPNTGGKT. The region spanning 644 to 719 is the Smr domain; sequence LDLRGYRYED…GFGVTVATLK (76 aa).

This sequence belongs to the DNA mismatch repair MutS family. MutS2 subfamily. As to quaternary structure, homodimer. Binds to stalled ribosomes, contacting rRNA.

Its function is as follows. Endonuclease that is involved in the suppression of homologous recombination and thus may have a key role in the control of bacterial genetic diversity. In terms of biological role, acts as a ribosome collision sensor, splitting the ribosome into its 2 subunits. Detects stalled/collided 70S ribosomes which it binds and splits by an ATP-hydrolysis driven conformational change. Acts upstream of the ribosome quality control system (RQC), a ribosome-associated complex that mediates the extraction of incompletely synthesized nascent chains from stalled ribosomes and their subsequent degradation. Probably generates substrates for RQC. In Staphylococcus aureus, this protein is Endonuclease MutS2.